A 516-amino-acid chain; its full sequence is Melianol synthase CYP71BQ17 (516 aa).

A helical transmembrane segment spans residues Met-14–Val-34. Cys-454 is a heme binding site.

It belongs to the cytochrome P450 family. The cofactor is heme. Mainly expressed in roots and, to a lesser extent, in stems and old leaves.

The protein localises to the membrane. It carries out the reaction dihydroniloticin + 2 reduced [NADPH--hemoprotein reductase] + 2 O2 = melianol + 2 oxidized [NADPH--hemoprotein reductase] + 3 H2O + 2 H(+). It functions in the pathway secondary metabolite biosynthesis; terpenoid biosynthesis. Its function is as follows. Monooxygenase involved in the biosynthesis of quassinoids triterpene natural products such as ailanthone, chaparrinone, glaucarubinone and amarolide, allelopathic degraded triterpene lactones inhibiting the growth of other plants, and possessing antimalarial, antifeedant, insecticidal, anti-inflammatory and anticancer activities. Catalyzes the conversion of dihydroniloticin to the protolimonoid melianol. The polypeptide is Melianol synthase CYP71BQ17 (Ailanthus altissima (Tree-of-heaven)).